We begin with the raw amino-acid sequence, 1669 residues long: Formin-like protein 12 (1669 aa).

Residues R5–L193 enclose the Phosphatase tensin-type domain. Residue C126 is the Phosphocysteine intermediate of the active site. The C2 tensin-type domain maps to P199–F338. Disordered stretches follow at residues Q688 to E709, D1025 to L1240, and I1631 to K1669. A compositionally biased stretch (basic and acidic residues) spans L1036–H1050. 4 stretches are compositionally biased toward pro residues: residues P1060–Q1069, A1098–I1127, P1136–R1190, and P1198–P1230. Positions N1247–A1646 constitute an FH2 domain.

The protein belongs to the formin-like family. Class-II subfamily.

The protein is Formin-like protein 12 (FH12) of Oryza sativa subsp. japonica (Rice).